We begin with the raw amino-acid sequence, 125 residues long: Large ribosomal subunit protein eL31 (125 aa).

This sequence belongs to the eukaryotic ribosomal protein eL31 family. Component of the large ribosomal subunit.

It localises to the cytoplasm. Functionally, component of the large ribosomal subunit. The ribosome is a large ribonucleoprotein complex responsible for the synthesis of proteins in the cell. The sequence is that of Large ribosomal subunit protein eL31 (rpl31) from Ictalurus punctatus (Channel catfish).